Reading from the N-terminus, the 824-residue chain is MVPSRRTWNLGATPSLRGLWRVGRVQEPKPGMARPAPASPAARPFPHTGQGRLRTGRGKDILPSGEEDSTSRTAARPSLAQCRALSVDWPGPRSPHRLYLTVQVENLKEKLISQAQEVSRLRSELGGTDAEKHRDRLMVENEQLRQELRRCEVELQELRAQPVVPCEGCEHSQESSQLRDKLSQLQLEVAENKGMLSELNLEVQQKTDRLAEVELRLKDCLAEKAQEEERLSRRLRDSHETIASLRAQSPPVKYVIKTVEVESSKTKQALSESQTRNQHLQEQVAMQRQVLKEMEQQLQNSHQLTVQLRAQIAMYEAELERAHGQMLEEMQSLEEDKNRAIEEAFARAQVEMKAVHENLAGVRTNLLTLQPALRTLTNDYNGLKRQVRGFPLLLQEALRSVKAEIGQAIEEVNSNNQELLRKYRRELQLRKKCHNELVRLKGNIRVIARVRPVTKEDGEGPEATNAVTFDPDDDSIIHLLHKGKPVSFELDKVFSPWASQQDVFQEVQALITSCIDGFNVCIFAYGQTGAGKTYTMEGTPENPGINQRALQLLFSEVQEKASDWQYNITVSAAEIYNEVLRDLLGKEPQEKLEIRLCPDGSGQLYVPGLTEFQVQSVDDINKVFEFGYNNRTTEFTNLNEHSSRSHALLIVTVRGVDCSTGLRTTGKLNLVDLAGSERVGKSGAEGNRLREAQHINRSLSALGDVIAALRSRQGHVPFRNSKLTYLLQDSLSGDSKTLMVVQVSPVEKNTSETLYSLRFAERVRSVELGPGSRRTELGSWSSQEHLEWEPACQTPQPTARAHSAPGSGTSSRPGSIRRKLQPSA.

Residues 27–79 form a disordered region; the sequence is EPKPGMARPAPASPAARPFPHTGQGRLRTGRGKDILPSGEEDSTSRTAARPSL. Residues 33–46 show a composition bias toward low complexity; sequence ARPAPASPAARPFP. Coiled-coil stretches lie at residues 100-360 and 393-430; these read LTVQ…ENLA and LLQE…LQLR. Residues 443–766 enclose the Kinesin motor domain; the sequence is NIRVIARVRP…LRFAERVRSV (324 aa). 526–533 provides a ligand contact to ATP; sequence GQTGAGKT. The interval 771 to 824 is disordered; the sequence is GSRRTELGSWSSQEHLEWEPACQTPQPTARAHSAPGSGTSSRPGSIRRKLQPSA. Residues serine 811 and serine 815 each carry the phosphoserine modification. Residues 815–824 are compositionally biased toward basic residues; sequence SIRRKLQPSA.

The protein belongs to the TRAFAC class myosin-kinesin ATPase superfamily. Kinesin family. As to quaternary structure, interacts with annexin XIIIB. In terms of tissue distribution, predominant expression in the kidney, testis and ovary. Also expressed in brain, heart, liver, lung and uterus.

It is found in the cytoplasm. It localises to the cytoskeleton. The protein resides in the cytoplasmic vesicle membrane. The protein localises to the cell junction. Its subcellular location is the adherens junction. It is found in the microtubule organizing center. It localises to the centrosome. Functionally, minus-end microtubule-dependent motor protein. Involved in apically targeted transport. Required for zonula adherens maintenance. This Mus musculus (Mouse) protein is Kinesin-like protein KIFC3 (Kifc3).